The sequence spans 121 residues: Large ribosomal subunit protein uL14c (121 aa).

The protein belongs to the universal ribosomal protein uL14 family. In terms of assembly, part of the 50S ribosomal subunit.

The protein localises to the plastid. The protein resides in the chloroplast. Its function is as follows. Binds to 23S rRNA. This chain is Large ribosomal subunit protein uL14c, found in Nephroselmis olivacea (Green alga).